Here is a 661-residue protein sequence, read N- to C-terminus: UvrABC system protein B (661 aa).

Positions Glu-23–Arg-180 constitute a Helicase ATP-binding domain. Gly-36–Thr-43 contributes to the ATP binding site. Residues Tyr-89–Ile-112 carry the Beta-hairpin motif. The region spanning Gln-426–Ile-592 is the Helicase C-terminal domain. Residues Glu-620–Lys-655 form the UVR domain.

It belongs to the UvrB family. In terms of assembly, forms a heterotetramer with UvrA during the search for lesions. Interacts with UvrC in an incision complex.

It localises to the cytoplasm. The UvrABC repair system catalyzes the recognition and processing of DNA lesions. A damage recognition complex composed of 2 UvrA and 2 UvrB subunits scans DNA for abnormalities. Upon binding of the UvrA(2)B(2) complex to a putative damaged site, the DNA wraps around one UvrB monomer. DNA wrap is dependent on ATP binding by UvrB and probably causes local melting of the DNA helix, facilitating insertion of UvrB beta-hairpin between the DNA strands. Then UvrB probes one DNA strand for the presence of a lesion. If a lesion is found the UvrA subunits dissociate and the UvrB-DNA preincision complex is formed. This complex is subsequently bound by UvrC and the second UvrB is released. If no lesion is found, the DNA wraps around the other UvrB subunit that will check the other stand for damage. The protein is UvrABC system protein B of Thermosipho africanus (strain TCF52B).